A 635-amino-acid polypeptide reads, in one-letter code: Threonine--tRNA ligase (635 aa).

Residues Met1–Thr58 form the TGS domain. The tract at residues Asp237–Pro528 is catalytic. Cys328, His379, and His505 together coordinate Zn(2+).

It belongs to the class-II aminoacyl-tRNA synthetase family. As to quaternary structure, homodimer. It depends on Zn(2+) as a cofactor.

The protein resides in the cytoplasm. The enzyme catalyses tRNA(Thr) + L-threonine + ATP = L-threonyl-tRNA(Thr) + AMP + diphosphate + H(+). In terms of biological role, catalyzes the attachment of threonine to tRNA(Thr) in a two-step reaction: L-threonine is first activated by ATP to form Thr-AMP and then transferred to the acceptor end of tRNA(Thr). Also edits incorrectly charged L-seryl-tRNA(Thr). The polypeptide is Threonine--tRNA ligase (Chlamydia trachomatis serovar L2b (strain UCH-1/proctitis)).